Consider the following 561-residue polypeptide: (+)-alpha-pinene synthase TPS2FN (561 aa).

(2E)-geranyl diphosphate-binding residues include Arg-276, Asp-313, Asp-317, Arg-455, and Asp-458. Residues Asp-313 and Asp-317 each coordinate Mg(2+). Residues 313 to 317 (DDIYD) carry the DDXXD motif motif. Mg(2+) is bound by residues Asp-458, Thr-462, and Glu-466.

It belongs to the terpene synthase family. Tpsb subfamily. Requires Mg(2+) as cofactor. The cofactor is Mn(2+). Expressed in glandular trichomes two to four weeks after flowering onset.

It carries out the reaction (2E)-geranyl diphosphate = (1R,5R)-alpha-pinene + diphosphate. The catalysed reaction is (2E)-geranyl diphosphate = (4S)-limonene + diphosphate. It catalyses the reaction (2E)-geranyl diphosphate = sabinene + diphosphate. The enzyme catalyses (2E)-geranyl diphosphate = beta-phellandrene + diphosphate. It carries out the reaction (2E)-geranyl diphosphate = camphene + diphosphate. The catalysed reaction is (2E)-geranyl diphosphate = isoterpinolene + diphosphate. It participates in secondary metabolite biosynthesis; terpenoid biosynthesis. It functions in the pathway terpene metabolism; (-)-alpha-pinene biosynthesis; (-)-alpha-pinene from geranyl diphosphate: step 1/1. Its function is as follows. Involved in monoterpene (C10) olefins biosynthesis, constituants of cannabinoids and terpenoids-rich resins. Catalyzes mainly the conversion of (2E)-geranyl diphosphate to (+)-alpha-pinene, and also produces minor products such as camphene, sabinene, beta-phellandrene, (-)-limonene and isoterpinolene. This Cannabis sativa (Hemp) protein is (+)-alpha-pinene synthase TPS2FN.